A 102-amino-acid polypeptide reads, in one-letter code: A-type ATP synthase subunit F (102 aa).

Belongs to the V-ATPase F subunit family. As to quaternary structure, has multiple subunits with at least A(3), B(3), C, D, E, F, H, I and proteolipid K(x).

Its subcellular location is the cell membrane. Functionally, component of the A-type ATP synthase that produces ATP from ADP in the presence of a proton gradient across the membrane. This chain is A-type ATP synthase subunit F, found in Thermococcus sibiricus (strain DSM 12597 / MM 739).